Here is a 512-residue protein sequence, read N- to C-terminus: Metal transporter Nramp4 (512 aa).

The next 12 membrane-spanning stretches (helical) occupy residues 52–72 (LWLFTGPGFLMSIAFLDPGNL), 80–100 (AIAGYSLIWLLMWATAIGLLI), 129–149 (MVLWIMAEIALIGADIQEVIG), 161–181 (LVPLWAGVVITALDCFIFLFL), 189–209 (LEAVFAILIATMALAFAWMFG), 235–255 (AVGIVGCIIMPHNVFLHSALV), 277–297 (IESTGALAVSFIINVFVTTVF), 323–343 (YGGGFFPILYIWAIGVLAAGQ), 371–391 (ALITRSCAIIPTMIVALVFDS), 402–422 (WLNVLQSVQIPFAVIPLLCLV), 440–460 (ISWIVAALVIAINGYLMVDFF), and 468–488 (ILLVPVIIFAIAYVVFVLYLI).

Belongs to the NRAMP (TC 2.A.55) family. Expressed in vascular tissues.

The protein localises to the vacuole membrane. Vacuolar metal transporter involved in intracellular metal homeostasis. Can transport iron (Fe), manganese (Mn) and cadmium (Cd). Regulates metal accumulation under Fe starvation. Acts redundantly with NRAMP3 to mobilize vacuolar Fe and provide sufficient Fe during seed germination. In association with NRAMP3, required for optimal growth and photosynthesis under Mn deficiency. Exports Mn from vacuoles in leaf mesophyll cells, making Mn available for functional photosystem II in chloroplasts. This is Metal transporter Nramp4 (NRAMP4) from Arabidopsis thaliana (Mouse-ear cress).